The primary structure comprises 508 residues: Photosystem II CP47 reaction center protein (508 aa).

The next 6 membrane-spanning stretches (helical) occupy residues 21–36, 101–115, 140–156, 203–218, 237–252, and 457–472; these read SVHI…WAGS, IVFS…IWHW, GIHL…FGAF, IAAG…FHLS, VLSS…AFVV, and TFAL…HGAR.

This sequence belongs to the PsbB/PsbC family. PsbB subfamily. As to quaternary structure, PSII is composed of 1 copy each of membrane proteins PsbA, PsbB, PsbC, PsbD, PsbE, PsbF, PsbH, PsbI, PsbJ, PsbK, PsbL, PsbM, PsbT, PsbX, PsbY, PsbZ, Psb30/Ycf12, at least 3 peripheral proteins of the oxygen-evolving complex and a large number of cofactors. It forms dimeric complexes. Requires Binds multiple chlorophylls. PSII binds additional chlorophylls, carotenoids and specific lipids. as cofactor.

The protein localises to the plastid. The protein resides in the chloroplast thylakoid membrane. Its function is as follows. One of the components of the core complex of photosystem II (PSII). It binds chlorophyll and helps catalyze the primary light-induced photochemical processes of PSII. PSII is a light-driven water:plastoquinone oxidoreductase, using light energy to abstract electrons from H(2)O, generating O(2) and a proton gradient subsequently used for ATP formation. This Oryza sativa subsp. indica (Rice) protein is Photosystem II CP47 reaction center protein.